Reading from the N-terminus, the 551-residue chain is Medium/long-chain-fatty-acid--CoA/3-oxocholest-4-en-26-oate--CoA ligase (551 aa).

ATP is bound by residues 172–180 (TGGTTGFPK), Asp417, Arg432, and Lys523.

It belongs to the ATP-dependent AMP-binding enzyme family.

The enzyme catalyses a medium-chain fatty acid + ATP + CoA = a medium-chain fatty acyl-CoA + AMP + diphosphate. It carries out the reaction a long-chain fatty acid + ATP + CoA = a long-chain fatty acyl-CoA + AMP + diphosphate. It catalyses the reaction (25S)-3-oxocholest-4-en-26-oate + ATP + CoA = (25S)-3-oxocholest-4-en-26-oyl-CoA + AMP + diphosphate. Its pathway is lipid metabolism; fatty acid biosynthesis. It participates in steroid metabolism; cholesterol metabolism. Plays an essential role in degradation of the side chains of C-24 branched-chain sterols. Not essential for degradation of straight chain sterols such as cholesterol. Catalyzes the activation of medium/long-chain fatty acids as acyl-coenzyme A (acyl-CoA), which are then transferred to the multifunctional polyketide synthase (PKS) type III for further chain extension. May be involved in the degradation of cholesterol via the degradation of the side chains of C-24 branched-chain sterols. This chain is Medium/long-chain-fatty-acid--CoA/3-oxocholest-4-en-26-oate--CoA ligase, found in Mycolicibacterium smegmatis (strain ATCC 700084 / mc(2)155) (Mycobacterium smegmatis).